The primary structure comprises 999 residues: Signal peptide, CUB and EGF-like domain-containing protein 2 (999 aa).

The signal sequence occupies residues methionine 1 to alanine 31. The region spanning aspartate 45–glutamate 85 is the EGF-like 1; calcium-binding domain. Disulfide bonds link cysteine 49-cysteine 62, cysteine 56-cysteine 71, cysteine 73-cysteine 84, cysteine 90-cysteine 102, cysteine 98-cysteine 111, and cysteine 113-cysteine 126. Residues aspartate 86–leucine 127 enclose the EGF-like 2; calcium-binding domain. The EGF-like 3; calcium-binding domain occupies aspartate 128–isoleucine 168. EGF-like domains lie at cysteine 177–cysteine 213, cysteine 217–cysteine 252, and cysteine 286–cysteine 321. In terms of domain architecture, EGF-like 7; calcium-binding spans aspartate 323–glutamine 363. An EGF-like 8; calcium-binding domain is found at aspartate 364–glycine 402. Cystine bridges form between cysteine 368–cysteine 378, cysteine 374–cysteine 387, cysteine 389–cysteine 401, cysteine 407–cysteine 418, cysteine 414–cysteine 427, and cysteine 429–cysteine 442. Residues aspartate 403–valine 443 enclose the EGF-like 9; calcium-binding domain. The N-linked (GlcNAc...) asparagine glycan is linked to asparagine 659. Cysteine 809 and cysteine 835 are oxidised to a cystine. A CUB domain is found at cysteine 809 to tyrosine 921. The segment at isoleucine 847–leucine 856 is interaction with the cholesterol-anchor of SHH. An intrachain disulfide couples cysteine 862 to cysteine 883.

As to quaternary structure, forms homooligomers. Forms heterooligomers with SCUBE1. Forms heterooligomers with SCUBE3. Interacts with SHH via the cholesterol anchor of the dually lipid-modified SHH (ShhNp). Interacts with PTCH1. Interacts with VEGFR2. N-glycosylated. Expressed in a broad spectrum of adult tissues.

Its subcellular location is the secreted. The protein resides in the cell surface. Lipid-binding protein required for SHH long-range signaling by binding to the dually lipid-modified SHH (ShhNp) and by promoting ShhNp mobilization, solubilization and release from the cell membrane. Acts by enhancing the proteolytic processing (shedding) of the lipid-modified N- and C- terminal of ShhNp at the cell surface. Synergizes with DISP1 to increase SHH secretion. Probable cell surface coreceptor for VEGFR2 involved in VEGFR2-mediated angiogenesis. The chain is Signal peptide, CUB and EGF-like domain-containing protein 2 from Homo sapiens (Human).